The following is a 45-amino-acid chain: FKBP-type peptidyl-prolyl cis-trans isomerase, chloroplastic (45 aa).

It belongs to the FKBP-type PPIase family. Expressed in leaves, but not in roots.

The protein localises to the plastid. Its subcellular location is the chloroplast thylakoid lumen. It carries out the reaction [protein]-peptidylproline (omega=180) = [protein]-peptidylproline (omega=0). Its function is as follows. PPIases accelerate the folding of proteins. It catalyzes the cis-trans isomerization of proline imidic peptide bonds in oligopeptides. The sequence is that of FKBP-type peptidyl-prolyl cis-trans isomerase, chloroplastic from Vicia faba (Broad bean).